Reading from the N-terminus, the 201-residue chain is 3-isopropylmalate dehydratase small subunit (201 aa).

The protein belongs to the LeuD family. LeuD type 1 subfamily. As to quaternary structure, heterodimer of LeuC and LeuD.

It carries out the reaction (2R,3S)-3-isopropylmalate = (2S)-2-isopropylmalate. Its pathway is amino-acid biosynthesis; L-leucine biosynthesis; L-leucine from 3-methyl-2-oxobutanoate: step 2/4. In terms of biological role, catalyzes the isomerization between 2-isopropylmalate and 3-isopropylmalate, via the formation of 2-isopropylmaleate. This chain is 3-isopropylmalate dehydratase small subunit, found in Nitrobacter winogradskyi (strain ATCC 25391 / DSM 10237 / CIP 104748 / NCIMB 11846 / Nb-255).